Reading from the N-terminus, the 168-residue chain is uncharacterized protein (168 aa).

The next 2 membrane-spanning stretches (helical) occupy residues 41–61 and 133–153; these read LLPW…LFFI and KFVI…FFVL.

It is found in the cell membrane. This is an uncharacterized protein from Thermotoga maritima (strain ATCC 43589 / DSM 3109 / JCM 10099 / NBRC 100826 / MSB8).